The chain runs to 576 residues: Deformed epidermal autoregulatory factor 1 (576 aa).

Disordered stretches follow at residues 52-76 (VTSSSNDNSGSGGASGGTSGAGGGN), 189-215 (AGGASGVGGGGGGTGGGSSGWSENPST), and 309-362 (ESAS…SGSG). Composition is skewed to gly residues over residues 61–76 (GSGGASGGTSGAGGGN) and 191–207 (GASGVGGGGGGTGGGSS). The SAND domain occupies 210–291 (SENPSTQHNE…QSLIDEGTLT (82 aa)). The short motif at 324-340 (RKRNQTDLDMESGPKRK) is the Nuclear localization signal element. The segment covering 345 to 362 (HSNNNNSNTNNNNTSGSG) has biased composition (low complexity). Residues C521, C524, C532, C535, C541, C545, H553, and C557 each contribute to the Zn(2+) site. The segment at 521–557 (CANCNREALAECSLCRKTPYCSEFCQRKDWNAHQVEC) adopts an MYND-type zinc-finger fold.

Its subcellular location is the nucleus. Transcription factor that binds the homeotic Deformed (Dfd) response element. High affinity binding sites contain at least 1 TTCG motif surrounded by additional TCG sequences. May be involved in the selective action of Dfd on these sites without binding directly to the Dfd protein. Requirement of DEAF1 activity may be a common feature of enhancers targeted by Dfd. This is Deformed epidermal autoregulatory factor 1 (Deaf1) from Drosophila melanogaster (Fruit fly).